The following is a 309-amino-acid chain: Replication factor C subunit 4 (309 aa).

ATP is bound by residues Val5, Val17, 42 to 50, Asn134, and Arg192; that span reads GPPGTGKTT.

This sequence belongs to the activator 1 small subunits family. As to quaternary structure, component of the replication factor C (RFC) complex.

Its subcellular location is the nucleus. In terms of biological role, component of ATP-dependent clamp loader (RFC and RFC-like) complexes for DNA clamps. During a clamp loading circle, the RFC:clamp complex binds to DNA and the recognition of the double-stranded/single-stranded junction stimulates ATP hydrolysis by RFC. The complex presumably provides bipartite ATP sites in which one subunit supplies a catalytic site for hydrolysis of ATP bound to the neighboring subunit. Dissociation of RFC from the clamp leaves the clamp encircling DNA. Component of the replication factor C (RFC or activator 1) complex which acts during elongation of primed DNA templates by DNA polymerase delta and epsilon. RFC has an essential but redundant activity in sister chromatid cohesion establishment. This is Replication factor C subunit 4 (RFC4) from Encephalitozoon cuniculi (strain GB-M1) (Microsporidian parasite).